A 164-amino-acid chain; its full sequence is Large ribosomal subunit protein uL10 (164 aa).

This sequence belongs to the universal ribosomal protein uL10 family. Part of the ribosomal stalk of the 50S ribosomal subunit. The N-terminus interacts with L11 and the large rRNA to form the base of the stalk. The C-terminus forms an elongated spine to which L12 dimers bind in a sequential fashion forming a multimeric L10(L12)X complex.

Its function is as follows. Forms part of the ribosomal stalk, playing a central role in the interaction of the ribosome with GTP-bound translation factors. In Helicobacter pylori (strain HPAG1), this protein is Large ribosomal subunit protein uL10.